A 218-amino-acid polypeptide reads, in one-letter code: Peptide methionine sulfoxide reductase MsrA (218 aa).

The active site involves cysteine 54.

It belongs to the MsrA Met sulfoxide reductase family.

The enzyme catalyses L-methionyl-[protein] + [thioredoxin]-disulfide + H2O = L-methionyl-(S)-S-oxide-[protein] + [thioredoxin]-dithiol. The catalysed reaction is [thioredoxin]-disulfide + L-methionine + H2O = L-methionine (S)-S-oxide + [thioredoxin]-dithiol. Functionally, has an important function as a repair enzyme for proteins that have been inactivated by oxidation. Catalyzes the reversible oxidation-reduction of methionine sulfoxide in proteins to methionine. This is Peptide methionine sulfoxide reductase MsrA from Azorhizobium caulinodans (strain ATCC 43989 / DSM 5975 / JCM 20966 / LMG 6465 / NBRC 14845 / NCIMB 13405 / ORS 571).